The primary structure comprises 224 residues: Lipoprotein-releasing system ATP-binding protein LolD (224 aa).

In terms of domain architecture, ABC transporter spans 6-224; sequence LEFCNVSKFF…IVNHSLISSI (219 aa). Residue 43–50 coordinates ATP; sequence GASGVGKT.

It belongs to the ABC transporter superfamily. Lipoprotein translocase (TC 3.A.1.125) family. In terms of assembly, the complex is composed of two ATP-binding proteins (LolD) and two transmembrane proteins (LolC and LolE).

It localises to the cell inner membrane. In terms of biological role, part of the ABC transporter complex LolCDE involved in the translocation of mature outer membrane-directed lipoproteins, from the inner membrane to the periplasmic chaperone, LolA. Responsible for the formation of the LolA-lipoprotein complex in an ATP-dependent manner. The protein is Lipoprotein-releasing system ATP-binding protein LolD of Neorickettsia sennetsu (strain ATCC VR-367 / Miyayama) (Ehrlichia sennetsu).